The sequence spans 142 residues: Hemoglobin subunit alpha-A (142 aa).

A Globin domain is found at 2–142 (VLSAADKNNV…VGTVLTAKYR (141 aa)). O2 is bound at residue His59. His88 lines the heme b pocket.

Belongs to the globin family. In terms of assembly, heterotetramer of two alpha chains and two beta chains. Red blood cells.

In terms of biological role, involved in oxygen transport from the lung to the various peripheral tissues. This Gallus gallus (Chicken) protein is Hemoglobin subunit alpha-A (HBAA).